Here is a 127-residue protein sequence, read N- to C-terminus: Glycine cleavage system H protein (127 aa).

The region spanning 24–106 is the Lipoyl-binding domain; sequence TATIGITDYA…YAEGWMLKLK (83 aa). N6-lipoyllysine is present on Lys65.

The protein belongs to the GcvH family. The glycine cleavage system is composed of four proteins: P, T, L and H. Requires (R)-lipoate as cofactor.

Functionally, the glycine cleavage system catalyzes the degradation of glycine. The H protein shuttles the methylamine group of glycine from the P protein to the T protein. The sequence is that of Glycine cleavage system H protein from Opitutus terrae (strain DSM 11246 / JCM 15787 / PB90-1).